Reading from the N-terminus, the 429-residue chain is Serine--tRNA ligase (429 aa).

228 to 230 (TSE) contributes to the L-serine binding site. 259-261 (RAE) serves as a coordination point for ATP. Glutamate 282 contributes to the L-serine binding site. Position 346–349 (346–349 (EISS)) interacts with ATP. Residue serine 384 participates in L-serine binding.

It belongs to the class-II aminoacyl-tRNA synthetase family. Type-1 seryl-tRNA synthetase subfamily. Homodimer. The tRNA molecule binds across the dimer.

It localises to the cytoplasm. It carries out the reaction tRNA(Ser) + L-serine + ATP = L-seryl-tRNA(Ser) + AMP + diphosphate + H(+). The catalysed reaction is tRNA(Sec) + L-serine + ATP = L-seryl-tRNA(Sec) + AMP + diphosphate + H(+). It functions in the pathway aminoacyl-tRNA biosynthesis; selenocysteinyl-tRNA(Sec) biosynthesis; L-seryl-tRNA(Sec) from L-serine and tRNA(Sec): step 1/1. Catalyzes the attachment of serine to tRNA(Ser). Is also able to aminoacylate tRNA(Sec) with serine, to form the misacylated tRNA L-seryl-tRNA(Sec), which will be further converted into selenocysteinyl-tRNA(Sec). The protein is Serine--tRNA ligase of Anaplasma marginale (strain St. Maries).